Consider the following 534-residue polypeptide: MAREQLQVLNALDVAKTQWYHFTAIIIAGMGFFTDAYDLFCISLVTKLLGRIYYHVEGAQKPGTLPPNVAAAVNGVAFCGTLAGQLFFGWLGDKLGRKKVYGMTLMVMVLCSIASGLSFGHEPKAVMATLCFFRFWLGFGIGGDYPLSATIMSEYANKKTRGAFVSAVFAMQGFGIMAGGIFAIIISSAFEAKFPSPAYADDALGSTIPQADLVWRIILMAGAIPAAMTYYSRSKMPETARYTALVAKDAKQAASDMSKVLQVEIEPEQQKLEEISKEKSKAFGLFSKEFMSRHGLHLLGTTSTWFLLDIAFYSQNLFQKDIFSAIGWIPPAQSMNAIQEVFKIARAQTLIALCSTVPGYWFTVAFIDVIGRFAIQMMGFFFMTVFMFALAIPYNHWTHKENRIGFVIMYSLTFFFANFGPNATTFVVPAEIFPARFRSTCHGISAASGKLGAMVGAFGFLYLAQNPDKDKTDAGYPPGIGVRNSLIVLGVVNFLGILFTFLVPESKGKSLEEMSGENEDNENSNNDSRTVPIV.

Residues 1 to 24 lie on the Cytoplasmic side of the membrane; that stretch reads MAREQLQVLNALDVAKTQWYHFTA. A helical transmembrane segment spans residues 25–45; sequence IIIAGMGFFTDAYDLFCISLV. At 46–70 the chain is on the extracellular side; that stretch reads TKLLGRIYYHVEGAQKPGTLPPNVA. The chain crosses the membrane as a helical span at residues 71-91; it reads AAVNGVAFCGTLAGQLFFGWL. Topologically, residues 92 to 99 are cytoplasmic; sequence GDKLGRKK. A helical membrane pass occupies residues 100-120; it reads VYGMTLMVMVLCSIASGLSFG. Over 121 to 131 the chain is Extracellular; sequence HEPKAVMATLC. The chain crosses the membrane as a helical span at residues 132–152; that stretch reads FFRFWLGFGIGGDYPLSATIM. Over 153-161 the chain is Cytoplasmic; that stretch reads SEYANKKTR. Residues 162-182 traverse the membrane as a helical segment; it reads GAFVSAVFAMQGFGIMAGGIF. Residues 183-211 are Extracellular-facing; the sequence is AIIISSAFEAKFPSPAYADDALGSTIPQA. A helical transmembrane segment spans residues 212–232; the sequence is DLVWRIILMAGAIPAAMTYYS. The Cytoplasmic portion of the chain corresponds to 233 to 293; that stretch reads RSKMPETARY…GLFSKEFMSR (61 aa). Residues 294-314 form a helical membrane-spanning segment; the sequence is HGLHLLGTTSTWFLLDIAFYS. Topologically, residues 315–349 are extracellular; it reads QNLFQKDIFSAIGWIPPAQSMNAIQEVFKIARAQT. The chain crosses the membrane as a helical span at residues 350-370; the sequence is LIALCSTVPGYWFTVAFIDVI. Topologically, residues 371 to 372 are cytoplasmic; it reads GR. Residues 373 to 393 form a helical membrane-spanning segment; it reads FAIQMMGFFFMTVFMFALAIP. The Extracellular segment spans residues 394–403; the sequence is YNHWTHKENR. The chain crosses the membrane as a helical span at residues 404-424; that stretch reads IGFVIMYSLTFFFANFGPNAT. At 425 to 442 the chain is on the cytoplasmic side; the sequence is TFVVPAEIFPARFRSTCH. Residues 443-463 traverse the membrane as a helical segment; the sequence is GISAASGKLGAMVGAFGFLYL. Residues 464 to 484 are Extracellular-facing; sequence AQNPDKDKTDAGYPPGIGVRN. The chain crosses the membrane as a helical span at residues 485-505; that stretch reads SLIVLGVVNFLGILFTFLVPE. Over 506 to 534 the chain is Cytoplasmic; sequence SKGKSLEEMSGENEDNENSNNDSRTVPIV. The interval 512 to 534 is disordered; sequence EEMSGENEDNENSNNDSRTVPIV. Phosphoserine is present on residues S524 and S528.

The protein belongs to the major facilitator superfamily. Phosphate:H(+) symporter (TC 2.A.1.9) family. As to quaternary structure, interacts with NLA. In terms of processing, ubiquitinated by NLA. Ubiquitination of PHT1-4 leads to its degradation by the proteasome. Mostly expressed in roots, in tissues connecting the lateral roots to the primary root. Also present in flowers, in senescing anther filaments and in the abscission zone at the base of siliques. Expressed in hydathodes and axillary buds, and in some senescing leaves. After Pi starvation, localized in all cells of undifferentiated root segments, including root tips and root hairs, and in the epidermis, cortex and stellar regions of mature root segments.

It localises to the cell membrane. Its function is as follows. High-affinity transporter for external inorganic phosphate. Acts as a H(+):phosphate symporter in both low- and high-Pi conditions. Confers sensitivity to arsenate. The sequence is that of Inorganic phosphate transporter 1-4 (PHT1-4) from Arabidopsis thaliana (Mouse-ear cress).